The sequence spans 105 residues: Large ribosomal subunit protein uL24 (105 aa).

Belongs to the universal ribosomal protein uL24 family. As to quaternary structure, part of the 50S ribosomal subunit.

Its function is as follows. One of two assembly initiator proteins, it binds directly to the 5'-end of the 23S rRNA, where it nucleates assembly of the 50S subunit. In terms of biological role, one of the proteins that surrounds the polypeptide exit tunnel on the outside of the subunit. The chain is Large ribosomal subunit protein uL24 from Aeromonas hydrophila subsp. hydrophila (strain ATCC 7966 / DSM 30187 / BCRC 13018 / CCUG 14551 / JCM 1027 / KCTC 2358 / NCIMB 9240 / NCTC 8049).